The chain runs to 349 residues: Aspartate-semialdehyde dehydrogenase (349 aa).

NADP(+)-binding positions include 12-15 (TGSV) and 39-40 (NS). R113 contacts phosphate. C148 functions as the Acyl-thioester intermediate in the catalytic mechanism. Q175 contacts substrate. An NADP(+)-binding site is contributed by 178–179 (SG). Substrate is bound at residue E201. A phosphate-binding site is contributed by K204. R234 contributes to the substrate binding site. Residue H241 is the Proton acceptor of the active site. 326-327 (NT) provides a ligand contact to NADP(+).

Belongs to the aspartate-semialdehyde dehydrogenase family. In terms of assembly, homodimer.

It carries out the reaction L-aspartate 4-semialdehyde + phosphate + NADP(+) = 4-phospho-L-aspartate + NADPH + H(+). It participates in amino-acid biosynthesis; L-lysine biosynthesis via DAP pathway; (S)-tetrahydrodipicolinate from L-aspartate: step 2/4. The protein operates within amino-acid biosynthesis; L-methionine biosynthesis via de novo pathway; L-homoserine from L-aspartate: step 2/3. Its pathway is amino-acid biosynthesis; L-threonine biosynthesis; L-threonine from L-aspartate: step 2/5. Catalyzes the NADPH-dependent formation of L-aspartate-semialdehyde (L-ASA) by the reductive dephosphorylation of L-aspartyl-4-phosphate. The chain is Aspartate-semialdehyde dehydrogenase from Leptospira interrogans serogroup Icterohaemorrhagiae serovar Lai (strain 56601).